A 389-amino-acid polypeptide reads, in one-letter code: Putative F-box protein At1g47790 (389 aa).

Residues Ser19–Tyr65 form the F-box domain.

The polypeptide is Putative F-box protein At1g47790 (Arabidopsis thaliana (Mouse-ear cress)).